We begin with the raw amino-acid sequence, 157 residues long: Ribonuclease H (157 aa).

The 143-residue stretch at 4-146 (KRTEITIYTD…CDKLAVKASQ (143 aa)) folds into the RNase H type-1 domain. Residues aspartate 13, glutamate 51, aspartate 73, and aspartate 138 each coordinate Mg(2+).

The protein belongs to the RNase H family. As to quaternary structure, monomer. Requires Mg(2+) as cofactor.

It localises to the cytoplasm. The enzyme catalyses Endonucleolytic cleavage to 5'-phosphomonoester.. In terms of biological role, endonuclease that specifically degrades the RNA of RNA-DNA hybrids. This Trichodesmium erythraeum (strain IMS101) protein is Ribonuclease H.